The chain runs to 188 residues: MLQLHPSEIKDLVLNGGVIAYPTEAVYGLGCDPDNDTAIQKLLAVKQRPWQKGLILVASEFSQLVDYVDESQLSAEQLEFAFSKWPGPFTFVMPIKPHVSRYLCGEFDSIAVRVSAHDGVRALCQALGKPLVSTSANLAGEDPALSGDEILNAFEGKIDALVLGALGEQRQPSTIIDARSGKILRNGQ.

The region spanning 3 to 188 (QLHPSEIKDL…RSGKILRNGQ (186 aa)) is the YrdC-like domain.

The protein belongs to the SUA5 family. TsaC subfamily.

The protein localises to the cytoplasm. It carries out the reaction L-threonine + hydrogencarbonate + ATP = L-threonylcarbamoyladenylate + diphosphate + H2O. Functionally, required for the formation of a threonylcarbamoyl group on adenosine at position 37 (t(6)A37) in tRNAs that read codons beginning with adenine. Catalyzes the conversion of L-threonine, HCO(3)(-)/CO(2) and ATP to give threonylcarbamoyl-AMP (TC-AMP) as the acyladenylate intermediate, with the release of diphosphate. The polypeptide is Threonylcarbamoyl-AMP synthase (Shewanella sp. (strain ANA-3)).